The primary structure comprises 439 residues: Enolase 2 (439 aa).

The substrate site is built by histidine 160 and glutamate 169. Catalysis depends on glutamate 212, which acts as the Proton donor. Mg(2+) is bound by residues aspartate 247, glutamate 296, and aspartate 323. Substrate contacts are provided by glutamate 296 and aspartate 323. Lysine 348 (proton acceptor) is an active-site residue. Substrate-binding positions include 375 to 378 (SHRS) and lysine 399.

This sequence belongs to the enolase family. As to quaternary structure, homodimer. Mg(2+) serves as cofactor.

The protein resides in the cytoplasm. The catalysed reaction is (2R)-2-phosphoglycerate = phosphoenolpyruvate + H2O. It functions in the pathway carbohydrate degradation; glycolysis; pyruvate from D-glyceraldehyde 3-phosphate: step 4/5. In Debaryomyces hansenii (strain ATCC 36239 / CBS 767 / BCRC 21394 / JCM 1990 / NBRC 0083 / IGC 2968) (Yeast), this protein is Enolase 2 (ENO2).